The primary structure comprises 449 residues: Naphthalene 1,2-dioxygenase system, large oxygenase component (449 aa).

A Rieske domain is found at 39-137; it reads WLFLTHDSLI…LDKKCMGLKE (99 aa). The [2Fe-2S] cluster site is built by Cys-81, His-83, Cys-101, and His-104. Positions 208, 213, and 362 each coordinate Fe cation.

Belongs to the bacterial ring-hydroxylating dioxygenase alpha subunit family. In terms of assembly, the naphthalene dioxygenase (NDO) multicomponent enzyme system is composed of an electron transfer component and a dioxygenase component (iron sulfur protein (ISP)). The electron transfer component is composed of a ferredoxin reductase (NdoR) and a ferredoxin (NdoA), and the dioxygenase component is formed of a heterohexamer (trimer of heterodimers) of three large alpha subunits (NdoB) and three small beta subunits (NdoC). [2Fe-2S] cluster serves as cofactor. It depends on Fe(2+) as a cofactor.

The enzyme catalyses naphthalene + NADH + O2 + H(+) = (1R,2S)-1,2-dihydronaphthalene-1,2-diol + NAD(+). Its pathway is aromatic compound metabolism; naphthalene degradation. Its function is as follows. Component of the naphthalene dioxygenase (NDO) multicomponent enzyme system which catalyzes the incorporation of both atoms of molecular oxygen into naphthalene to form cis-(1R,2S)-dihydroxy-1,2-dihydronaphthalene. The alpha subunit has a catalytic role in the holoenzyme. The polypeptide is Naphthalene 1,2-dioxygenase system, large oxygenase component (Pseudomonas aeruginosa).